The primary structure comprises 940 residues: Phosphoenolpyruvate carboxylase (940 aa).

Residues H138 and K603 contribute to the active site.

It belongs to the PEPCase type 1 family. The cofactor is Mg(2+).

The enzyme catalyses oxaloacetate + phosphate = phosphoenolpyruvate + hydrogencarbonate. Functionally, forms oxaloacetate, a four-carbon dicarboxylic acid source for the tricarboxylic acid cycle. The polypeptide is Phosphoenolpyruvate carboxylase (Streptococcus thermophilus (strain ATCC BAA-491 / LMD-9)).